The sequence spans 168 residues: Disulfide bond formation protein B (168 aa).

At 1–13 (MFLTYFDAMPRRV) the chain is on the cytoplasmic side. Residues 14-30 (LALVSLACVALLAFGLY) traverse the membrane as a helical segment. Topologically, residues 31–48 (LQHVVGLEPCPMCIVQRY) are periplasmic. Cys40 and Cys43 form a disulfide bridge. Residues 49-64 (ALVLVAVVAGITAVAK) traverse the membrane as a helical segment. The Cytoplasmic portion of the chain corresponds to 65 to 70 (SRGLLI). Residues 71 to 88 (TGSGLLVLLSGFGAFVAA) form a helical membrane-spanning segment. Residues 89 to 144 (RQSFLQWYPPEVASCGRDFYGMIETFPLKRAIPMIFKGSGDCTKIDWTFLGLSIAN) lie on the Periplasmic side of the membrane. An intrachain disulfide couples Cys103 to Cys130. Residues 145 to 163 (WSFLCFVAIALVGLVLITR) traverse the membrane as a helical segment. Topologically, residues 164–168 (LARQR) are cytoplasmic.

It belongs to the DsbB family.

The protein resides in the cell inner membrane. Required for disulfide bond formation in some periplasmic proteins. Acts by oxidizing the DsbA protein. This is Disulfide bond formation protein B from Polaromonas sp. (strain JS666 / ATCC BAA-500).